The following is a 241-amino-acid chain: Platelet-derived growth factor subunit B (241 aa).

Positions M1–A20 are cleaved as a signal peptide. A propeptide spans E21 to R81 (removed in mature form). The N-linked (GlcNAc...) asparagine glycan is linked to N63. Cystine bridges form between C97–C141, C130–C178, and C134–C180. A propeptide spans R191 to A241 (removed in mature form). Residues R216 to H230 show a composition bias toward basic residues. Residues R216–A241 are disordered.

Belongs to the PDGF/VEGF growth factor family. As to quaternary structure, antiparallel homodimer; disulfide-linked. Antiparallel heterodimer with PDGFA; disulfide-linked. The PDGFB homodimer interacts with PDGFRA and PDGFRB homodimers, and with heterodimers formed by PDGFRA and PDGFRB. The heterodimer composed of PDGFA and PDGFB interacts with PDGFRB homodimers, and with heterodimers formed by PDGFRA and PDGFRB. Interacts with XLKD1. Interacts with LRP1. Interacts with SORL1 (via the N-terminal ectodomain). Interacts with CD82; this interaction inhibits PDGFB-mediated signaling pathway. Expressed at high levels in the heart, brain (sustantia nigra), placenta and fetal kidney. Expressed at moderate levels in the brain (hippocampus), skeletal muscle, kidney and lung.

The protein localises to the secreted. Functionally, growth factor that plays an essential role in the regulation of embryonic development, cell proliferation, cell migration, survival and chemotaxis. Potent mitogen for cells of mesenchymal origin. Required for normal proliferation and recruitment of pericytes and vascular smooth muscle cells in the central nervous system, skin, lung, heart and placenta. Required for normal blood vessel development, and for normal development of kidney glomeruli. Plays an important role in wound healing. Signaling is modulated by the formation of heterodimers with PDGFA. The chain is Platelet-derived growth factor subunit B (PDGFB) from Homo sapiens (Human).